An 81-amino-acid chain; its full sequence is Protein I5 homolog (81 aa).

The next 2 helical transmembrane spans lie at 8 to 28 (LITI…FSLV) and 53 to 73 (MEIF…AAYI).

The protein belongs to the Chordopoxvirinae I5 family.

It is found in the virion membrane. The protein is Protein I5 homolog of Vertebrata (FPV).